The primary structure comprises 621 residues: DnaJ homolog subfamily C member 2 (621 aa).

Methionine 1 carries the post-translational modification N-acetylmethionine. An epitope (recognized by CD8(+) cytotoxic T-lymphocytes) region spans residues 23–31; the sequence is STLCQVEPV. Residues serine 47, serine 49, serine 60, and serine 63 each carry the phosphoserine modification. The region spanning 88–161 is the J domain; that stretch reads DHYAVLGLGH…VKRRAFNSVD (74 aa). Residues 160 to 250 are ZRF1-UBD; the sequence is VDPTFDNSVP…RDERRWIEKQ (91 aa). Disordered stretches follow at residues 294-315 and 426-453; these read EKKA…QRQA and KEEA…GSKN. 2 consecutive SANT domains span residues 449-511 and 549-604; these read NGSK…KLDP and TDFT…EMVK.

In terms of assembly, component of ribosome-associated complex (RAC), a heterodimer composed of Hsp70/DnaK-type chaperone HSPA14 and Hsp40/DnaJ-type chaperone DNAJC2. Interacts (via ZRF1-UBD region) with ID1. Post-translationally, phosphorylated in M (mitotic) phase. As to expression, widely expressed.

It is found in the nucleus. The protein resides in the cytoplasm. The protein localises to the cytosol. Functionally, acts both as a chaperone in the cytosol and as a chromatin regulator in the nucleus. When cytosolic, acts as a molecular chaperone: component of the ribosome-associated complex (RAC), a complex involved in folding or maintaining nascent polypeptides in a folding-competent state. In the RAC complex, stimulates the ATPase activity of the ribosome-associated pool of Hsp70-type chaperones HSPA14 that bind to the nascent polypeptide chain. When nuclear, mediates the switching from polycomb-repressed genes to an active state: specifically recruited at histone H2A ubiquitinated at 'Lys-119' (H2AK119ub), and promotes the displacement of the polycomb PRC1 complex from chromatin, thereby facilitating transcription activation. This Homo sapiens (Human) protein is DnaJ homolog subfamily C member 2 (DNAJC2).